The following is a 478-amino-acid chain: Septin-4 (478 aa).

Residues 1 to 115 (MDHSLGWQGN…RSPWGKLDPY (115 aa)) form a disordered region. A phosphoserine mark is found at Ser-28, Ser-29, and Ser-68. Polar residues predominate over residues 84 to 93 (PQPSDSQQYF). Low complexity predominate over residues 94-108 (SAPAPLSPSSRPRSP). Residues Ser-117 and Ser-118 each carry the phosphoserine modification. In terms of domain architecture, Septin-type G spans 141 to 414 (KGFDFTLMVA…ENYRAQCIQS (274 aa)). The interval 151–158 (GESGLGKS) is G1 motif. GTP contacts are provided by residues 151–158 (GESGLGKS) and Thr-185. The interval 208-211 (DTPG) is G3 motif. The segment at 289 to 292 (AKAD) is G4 motif. 290–298 (KADTLTPPE) lines the GTP pocket. Residue Ser-325 is modified to Phosphoserine. Residues Gly-348 and Arg-363 each contribute to the GTP site. Residues 428–449 (LTRESGTDFPIPAVPPGTDPET) form a disordered region. Ser-432 carries the phosphoserine modification. Thr-434 bears the Phosphothreonine mark. The stretch at 447 to 478 (PETEKLIREKDEELRRMQEMLHKIQRQMKETH) forms a coiled coil.

Belongs to the TRAFAC class TrmE-Era-EngA-EngB-Septin-like GTPase superfamily. Septin GTPase family. In terms of assembly, septins polymerize into heterooligomeric protein complexes that form filaments, and can associate with cellular membranes, actin filaments and microtubules. GTPase activity is required for filament formation. Interacts with SEPTIN8. Component of a septin core octameric complex consisting of SEPTIN12, SEPTIN7, SEPTIN6 and SEPTIN2 or SEPTIN4 in the order 12-7-6-2-2-6-7-12 or 12-7-6-4-4-6-7-12. Interacts with SEPTIN14 (via C-terminus). Interacts with DYRK1A. Interacts with SLC6A3/DAT and SNCA/alpha-synuclein. Interacts with STX1A; in the striatum. Interacts with XIAP (via BIR3 domain) following the induction of apoptosis. Interacts with AREL1 (via HECT domain); in the cytoplasm following induction of apoptosis. As to quaternary structure, interacts with DPYSL5. Post-translationally, phosphorylated by DYRK1A. Ubiquitinated by AREL1. In terms of processing, may be phosphorylated. As to expression, expressed in the cerebral cortex, striatum, midbrain, cerebellum and spinal cord (at protein level). Expressed in the substantia nigra pars compacta, ventral tegmental area, projection fiber bundles and in axon terminals surrounding striatal neurons (at protein level). Expressed in hair follicle stem cells (at protein level). Expressed in small intestinal crypts; abundantly expressed at the crypt base (at protein level). Widely expressed in the brain and to a lesser extent in the testis, lung and liver. In terms of tissue distribution, highly expressed in the brain and testis and, to a lesser extent in the heart, lung and kidney. In the brain, abundant in areas of high cell density, particularly in the stria terminalis. Expressed in the entorhinal, temporal and visual cortices and the hippocampus of the brain where is colocalizes with DYRK1A in postnatal day 1 and adult mice. Expressed and extensively colocalizes with DYRK1A in apical dendrites of pyramidal cells. Predominantly expressed in embryonic brain and dorsal root ganglion neurons. As to expression, expressed in LGR5-positive intestinal stem cells and lysozyme-positive Paneth cells (at protein level). Expressed in the brain and testis.

It is found in the cytoplasm. Its subcellular location is the cell projection. It localises to the cilium. The protein localises to the flagellum. The protein resides in the cytoplasmic vesicle. It is found in the secretory vesicle. Its subcellular location is the axon. It localises to the dendrite. The protein localises to the perikaryon. The protein resides in the synapse. It is found in the mitochondrion. Its subcellular location is the cytosol. In terms of biological role, filament-forming cytoskeletal GTPase. Pro-apoptotic protein involved in LGR5-positive intestinal stem cell and Paneth cell expansion in the intestines, via its interaction with XIAP. May also play a role in the regulation of cell fate in the intestine. Positive regulator of apoptosis involved in hematopoietic stem cell homeostasis; via its interaction with XIAP. Negative regulator of repair and hair follicle regeneration in response to injury, due to inhibition of hair follicle stem cell proliferation, potentially via its interaction with XIAP. Plays an important role in male fertility and sperm motility. During spermiogenesis, essential for the establishment of the annulus (a fibrous ring structure connecting the midpiece and the principal piece of the sperm flagellum) which is a requisite for the structural and mechanical integrity of the sperm. Involved in the migration of cortical neurons and the formation of neuron leading processes during embryonic development. Required for dopaminergic metabolism in presynaptic autoreceptors; potentially via activity as a presynaptic scaffold protein. This is Septin-4 from Mus musculus (Mouse).